We begin with the raw amino-acid sequence, 20 residues long: Flagellar filament 33 kDa core protein (20 aa).

The protein belongs to the bacterial flagellin family. In terms of assembly, the flagellum consists of an outer layer composed of repeating units of FlaA around a core that contains one or all of five antigenically related polypeptides.

The protein localises to the periplasmic flagellum. The protein resides in the periplasm. Functionally, component of the core of the flagella. In Spirochaeta aurantia, this protein is Flagellar filament 33 kDa core protein.